Reading from the N-terminus, the 254-residue chain is Urease accessory protein UreF (254 aa).

Basic and acidic residues predominate over residues Met-1–Glu-11. Residues Met-1–Asn-26 form a disordered region.

This sequence belongs to the UreF family. As to quaternary structure, ureH, UreF and UreG form a complex that acts as a GTP-hydrolysis-dependent molecular chaperone, activating the urease apoprotein by helping to assemble the nickel containing metallocenter of UreC. The UreE protein probably delivers the nickel.

The protein resides in the cytoplasm. In terms of biological role, required for maturation of urease via the functional incorporation of the urease nickel metallocenter. In Helicobacter pylori (strain ATCC 700392 / 26695) (Campylobacter pylori), this protein is Urease accessory protein UreF.